The primary structure comprises 367 residues: MKNEYLLLTPGPLSTSETVREAMLKDWCTWDDEYNKDIVEVIRTKLVKLATKHSGYTSVLMQGSGTASVEATIGSAIGKEGKLLVVDNGAYGARIAQIAAYLNIPCHVVSPGETSQPHLNEVETALASDPAITHVAIVHCETTTGMLNPIEAFASVAKAHGKVVILDAMSSFGGIPIDIAELGIDFMISSANKCIQGVPGFGFVIAKQTELEKCQGQARSLSLDLYDQWHCMEVNHGKWRFTSPTHTVRAFYQALLELEQEGGIEARHNRYQTNQKTLVAGMRSLGFEPLLSDDLHSPIITSFYSPTHSDYQFKAFYTRLKEQGFVIYPGKVSNADCFRIGNIGEVYPADIERLIGAIEKAMYWQVA.

Lys193 bears the N6-(pyridoxal phosphate)lysine mark.

It belongs to the class-V pyridoxal-phosphate-dependent aminotransferase family. PhnW subfamily. Homodimer. The cofactor is pyridoxal 5'-phosphate.

It catalyses the reaction (2-aminoethyl)phosphonate + pyruvate = phosphonoacetaldehyde + L-alanine. Functionally, involved in phosphonate degradation. The chain is 2-aminoethylphosphonate--pyruvate transaminase from Vibrio vulnificus (strain YJ016).